The chain runs to 417 residues: Ig-like V-type domain-containing protein FAM187A (417 aa).

A signal peptide spans 1-18 (MSLAHTTVLLWAWGSLQA). Topologically, residues 19–377 (FEIVEKESVF…ASLSDPETRT (359 aa)) are extracellular. Asparagine 248 and asparagine 318 each carry an N-linked (GlcNAc...) asparagine glycan. The Ig-like V-type domain maps to 268–362 (PWVPQVPIQF…IAGFRLGVIT (95 aa)). Cysteines 290 and 346 form a disulfide. Residues 378-398 (AIELTLMGYLLITIFFITIHL) form a helical membrane-spanning segment. The Cytoplasmic portion of the chain corresponds to 399–417 (CRCCCQSRCCPNFSAQTLL).

It belongs to the FAM187 family.

The protein resides in the membrane. The protein is Ig-like V-type domain-containing protein FAM187A (Fam187a) of Mus musculus (Mouse).